Reading from the N-terminus, the 478-residue chain is Melanopsin (478 aa).

Residues methionine 1–threonine 14 show a composition bias toward pro residues. The tract at residues methionine 1–serine 32 is disordered. Residues methionine 1–threonine 72 are Extracellular-facing. Residues leucine 73–tyrosine 93 form a helical membrane-spanning segment. The Cytoplasmic segment spans residues threonine 94 to methionine 107. The chain crosses the membrane as a helical span at residues phenylalanine 108 to phenylalanine 128. The Extracellular segment spans residues threonine 129–glutamate 144. Cysteine 143 and cysteine 221 are disulfide-bonded. Residues phenylalanine 145–alanine 165 traverse the membrane as a helical segment. Topologically, residues leucine 166 to alanine 188 are cytoplasmic. A helical transmembrane segment spans residues phenylalanine 189 to tryptophan 209. Topologically, residues serine 210 to leucine 238 are extracellular. Residues leucine 239–phenylalanine 259 traverse the membrane as a helical segment. Residues arginine 260–lysine 296 lie on the Cytoplasmic side of the membrane. The helical transmembrane segment at isoleucine 297–leucine 317 threads the bilayer. The Extracellular segment spans residues valine 318–serine 332. A helical membrane pass occupies residues serine 333–threonine 353. Lysine 340 carries the post-translational modification N6-(retinylidene)lysine. At histidine 354–methionine 478 the chain is on the cytoplasmic side. Residues leucine 440 to methionine 478 form a disordered region. A compositionally biased stretch (basic and acidic residues) spans leucine 448–glycine 465.

This sequence belongs to the G-protein coupled receptor 1 family. Opsin subfamily. In terms of tissue distribution, expressed in the retina.

The protein resides in the cell membrane. It is found in the cell projection. The protein localises to the axon. It localises to the dendrite. Its subcellular location is the perikaryon. Photoreceptor that binds cis-retinaldehydes. Contributes to pupillar reflex, photoentrainment and other non-image forming responses to light. May be involved in the optokinetic visual tracking response. May be involved in the regulation of retinal hyaloid vessel growth and regression. In Homo sapiens (Human), this protein is Melanopsin (OPN4).